The following is a 394-amino-acid chain: uncharacterized protein (394 aa).

The next 11 membrane-spanning stretches (helical) occupy residues 10–30 (PALIVLMSIATGLAVASNYYA), 50–70 (FIVTAAQLGYAAGLLFLVPLG), 79–99 (IVSMTLLAAGGMLITASSQSL), 100–120 (AMMILGTALTGLFSVVAQILV), 138–158 (TIMSGLLLGILLARTVAGLLA), 166–186 (VFWVASVLMALMALALWRGLP), 218–238 (LLGCLTFANFSILWTSMAFLL), 243–263 (FNYSDGVIGLFGLAGAAGALG), 291–311 (WLAIWFGHTSVLALIIGILVL), 337–357 (LTAGYMTSYFIGGAAGSLISA), and 364–384 (GWAGVCLAGATIALVNLLVWW).

This sequence belongs to the major facilitator superfamily.

The protein resides in the cell inner membrane. This is an uncharacterized protein from Escherichia coli O157:H7.